A 203-amino-acid chain; its full sequence is Alpha-amylase/subtilisin inhibitor (203 aa).

Residues 1-12 (MGSRRAGSSSSP) show a composition bias toward polar residues. Positions 1-22 (MGSRRAGSSSSPLFWPAPPSRA) are cleaved as a signal peptide. Residues 1–34 (MGSRRAGSSSSPLFWPAPPSRAADPPPVHDTDGH) form a disordered region. Residues 15-26 (WPAPPSRAADPP) show a composition bias toward pro residues. 2 disulfides stabilise this stretch: cysteine 65–cysteine 112 and cysteine 166–cysteine 170.

It belongs to the protease inhibitor I3 (leguminous Kunitz-type inhibitor) family.

Functionally, this protein inhibits independently subtilisin and alpha-amylase. The chain is Alpha-amylase/subtilisin inhibitor from Hordeum vulgare (Barley).